Here is a 258-residue protein sequence, read N- to C-terminus: Putative [LysW]-aminoadipate/[LysW]-glutamate kinase (258 aa).

Substrate contacts are provided by residues 33-34 (GG), Arg60, and Asn164.

Belongs to the acetylglutamate kinase family. LysZ subfamily.

The protein resides in the cytoplasm. It carries out the reaction [amino-group carrier protein]-C-terminal-N-(1,4-dicarboxybutan-1-yl)-L-glutamine + ATP = [amino-group carrier protein]-C-terminal-N-(1-carboxy-5-phosphooxy-5-oxopentan-1-yl)-L-glutamine + ADP. The catalysed reaction is [amino-group carrier protein]-C-terminal-gamma-(L-glutamyl)-L-glutamate + ATP = [amino-group carrier protein]-C-terminal-gamma-(5-phospho-L-glutamyl)-L-glutamate + ADP. It participates in amino-acid biosynthesis; L-lysine biosynthesis via AAA pathway; L-lysine from L-alpha-aminoadipate (Thermus route): step 2/5. Its pathway is amino-acid biosynthesis; L-arginine biosynthesis. Functionally, involved in both the arginine and lysine biosynthetic pathways. Phosphorylates the LysW-bound precursors glutamate (for arginine biosynthesis), respectively alpha-aminoadipate (for lysine biosynthesis). The protein is Putative [LysW]-aminoadipate/[LysW]-glutamate kinase of Caldivirga maquilingensis (strain ATCC 700844 / DSM 13496 / JCM 10307 / IC-167).